We begin with the raw amino-acid sequence, 396 residues long: S-adenosylmethionine synthase (396 aa).

H16 serves as a coordination point for ATP. D18 is a binding site for Mg(2+). E44 is a binding site for K(+). Residues E57 and Q100 each contribute to the L-methionine site. Residues 100-110 (QSVDIAQGVDR) form a flexible loop region. Residues 165–167 (DAK), D240, 246–247 (RK), A263, and K267 contribute to the ATP site. D240 serves as a coordination point for L-methionine. K271 lines the L-methionine pocket.

The protein belongs to the AdoMet synthase family. In terms of assembly, homotetramer; dimer of dimers. Mg(2+) serves as cofactor. Requires K(+) as cofactor.

Its subcellular location is the cytoplasm. The catalysed reaction is L-methionine + ATP + H2O = S-adenosyl-L-methionine + phosphate + diphosphate. The protein operates within amino-acid biosynthesis; S-adenosyl-L-methionine biosynthesis; S-adenosyl-L-methionine from L-methionine: step 1/1. Functionally, catalyzes the formation of S-adenosylmethionine (AdoMet) from methionine and ATP. The overall synthetic reaction is composed of two sequential steps, AdoMet formation and the subsequent tripolyphosphate hydrolysis which occurs prior to release of AdoMet from the enzyme. This is S-adenosylmethionine synthase from Pseudomonas syringae pv. syringae (strain B728a).